The chain runs to 92 residues: Small ribosomal subunit protein uS17 (92 aa).

This sequence belongs to the universal ribosomal protein uS17 family. As to quaternary structure, part of the 30S ribosomal subunit.

One of the primary rRNA binding proteins, it binds specifically to the 5'-end of 16S ribosomal RNA. This Corynebacterium glutamicum (strain ATCC 13032 / DSM 20300 / JCM 1318 / BCRC 11384 / CCUG 27702 / LMG 3730 / NBRC 12168 / NCIMB 10025 / NRRL B-2784 / 534) protein is Small ribosomal subunit protein uS17.